The chain runs to 101 residues: Small ribosomal subunit protein uS14 (101 aa).

This sequence belongs to the universal ribosomal protein uS14 family. Part of the 30S ribosomal subunit. Contacts proteins S3 and S10.

Binds 16S rRNA, required for the assembly of 30S particles and may also be responsible for determining the conformation of the 16S rRNA at the A site. The chain is Small ribosomal subunit protein uS14 from Dinoroseobacter shibae (strain DSM 16493 / NCIMB 14021 / DFL 12).